The sequence spans 611 residues: Mitogen-activated protein kinase 10 (611 aa).

The Protein kinase domain occupies 25–316; it reads YKIQEVIGKG…AEEALAHPYF (292 aa). ATP contacts are provided by residues 31-39 and Lys54; that span reads IGKGSYGVV. The active-site Proton acceptor is the Asp151. Thr187 bears the Phosphothreonine mark. A TXY motif is present at residues 187–189; that stretch reads TDY. Tyr189 bears the Phosphotyrosine mark. The disordered stretch occupies residues 394 to 481; the sequence is ENGGNGPVIP…RVVGPVLPYE (88 aa). The span at 426-439 shows a compositional bias: basic and acidic residues; sequence EQPRIGPSRDKPSD.

It belongs to the protein kinase superfamily. CMGC Ser/Thr protein kinase family. MAP kinase subfamily. In terms of processing, dually phosphorylated on Thr-187 and Tyr-189, which activates the enzyme.

The enzyme catalyses L-seryl-[protein] + ATP = O-phospho-L-seryl-[protein] + ADP + H(+). It catalyses the reaction L-threonyl-[protein] + ATP = O-phospho-L-threonyl-[protein] + ADP + H(+). Activated by threonine and tyrosine phosphorylation. The polypeptide is Mitogen-activated protein kinase 10 (MPK10) (Oryza sativa subsp. japonica (Rice)).